Reading from the N-terminus, the 70-residue chain is uncharacterized protein (70 aa).

Residues 15–37 traverse the membrane as a helical segment; it reads IFAFLLFRLCKFCCVFCCALCNV.

It is found in the membrane. This is an uncharacterized protein from Dictyostelium discoideum (Social amoeba).